Reading from the N-terminus, the 492-residue chain is 5-taurinomethyluridine-[tRNA] synthase subunit GTPB3, mitochondrial (492 aa).

The N-terminal 20 residues, Met-1–Cys-20, are a transit peptide targeting the mitochondrion. The 5,10-methylenetetrahydrofolate site is built by Arg-52, Glu-112, and Lys-152. The 168-residue stretch at Gly-249–Ala-416 folds into the TrmE-type G domain. Residues Gly-256–Ser-263, Gly-282–Asp-286, Asp-303–Gly-306, and Asn-374–Asp-377 contribute to the GTP site. Asn-259 contacts K(+). The Mg(2+) site is built by Ser-263 and Thr-284. Lys-492 contributes to the 5,10-methylenetetrahydrofolate binding site.

It belongs to the TRAFAC class TrmE-Era-EngA-EngB-Septin-like GTPase superfamily. TrmE GTPase family. Homodimer; forms a dimer in the presence of potassium. Interacts with MTO1; forms the GTPBP3-MTO1 complex composed of homodimers of GTPBP3 and MTO1. Requires K(+) as cofactor.

The protein resides in the mitochondrion. It carries out the reaction GTP + H2O = GDP + phosphate + H(+). Its function is as follows. GTPase component of the GTPBP3-MTO1 complex that catalyzes the 5-taurinomethyluridine (taum(5)U) modification at the 34th wobble position (U34) of mitochondrial tRNAs (mt-tRNAs), which plays a role in mt-tRNA decoding and mitochondrial translation. Taum(5)U formation on mammalian mt-tRNA requires the presence of both GTPBP3-mediated GTPase activity and MTO1 catalytic activity. This is 5-taurinomethyluridine-[tRNA] synthase subunit GTPB3, mitochondrial from Rattus norvegicus (Rat).